A 698-amino-acid chain; its full sequence is Serotransferrin (698 aa).

A signal peptide spans 1-19 (MRFAVGALLACAALGLCLA). Transferrin-like domains lie at 25–347 (VKWC…NQRE) and 360–683 (VKWC…NIRK). 2 disulfides stabilise this stretch: cysteine 28-cysteine 67 and cysteine 38-cysteine 58. Arginine 42 carries the dimethylated arginine modification. Positions 82 and 114 each coordinate Fe(3+). Intrachain disulfides connect cysteine 137-cysteine 213, cysteine 156-cysteine 350, cysteine 177-cysteine 193, cysteine 180-cysteine 196, cysteine 190-cysteine 198, cysteine 246-cysteine 260, cysteine 363-cysteine 395, and cysteine 373-cysteine 386. Hydrogencarbonate contacts are provided by threonine 139, arginine 143, alanine 145, and glycine 146. Tyrosine 207 is a Fe(3+) binding site. Fe(3+) is bound at residue histidine 268. Serine 388 carries the phosphoserine modification. Fe(3+)-binding residues include aspartate 410 and tyrosine 447. 8 disulfide bridges follow: cysteine 420-cysteine 693, cysteine 435-cysteine 656, cysteine 471-cysteine 542, cysteine 495-cysteine 684, cysteine 505-cysteine 519, cysteine 516-cysteine 525, cysteine 582-cysteine 596, and cysteine 634-cysteine 639. Residues threonine 473, arginine 477, alanine 479, and glycine 480 each contribute to the hydrogencarbonate site. Asparagine 512 carries N-linked (GlcNAc...) asparagine glycosylation. Tyrosine 536 is a binding site for Fe(3+). Histidine 604 lines the Fe(3+) pocket. Serine 685 carries the post-translational modification Phosphoserine.

This sequence belongs to the transferrin family. As to quaternary structure, monomer. Part of a complex composed of SLC40A1/ferroportin, TF/transferrin and HEPH/hephaestin that transfers iron from cells to transferrin. As to expression, expressed by the liver and secreted in plasma.

It is found in the secreted. Its function is as follows. Transferrins are iron binding transport proteins which can bind two Fe(3+) ions in association with the binding of an anion, usually bicarbonate. It is responsible for the transport of iron from sites of absorption and heme degradation to those of storage and utilization. Serum transferrin may also have a further role in stimulating cell proliferation. The polypeptide is Serotransferrin (Tf) (Rattus norvegicus (Rat)).